The following is a 147-amino-acid chain: Acidic phospholipase A2 S9-53F (147 aa).

A signal peptide spans 1-19; the sequence is MYPAHLLVLLAVCVSLLGA. The propeptide occupies 20–27; it reads SDIPPQPL. 7 cysteine pairs are disulfide-bonded: Cys-38–Cys-99, Cys-54–Cys-146, Cys-56–Cys-72, Cys-71–Cys-127, Cys-78–Cys-120, Cys-88–Cys-113, and Cys-106–Cys-118. Positions 55, 57, and 59 each coordinate Ca(2+). His-75 is an active-site residue. Asp-76 serves as a coordination point for Ca(2+). Residue Asp-121 is part of the active site.

The protein belongs to the phospholipase A2 family. Group I subfamily. D49 sub-subfamily. Ca(2+) serves as cofactor. In terms of tissue distribution, expressed by the venom gland.

The protein resides in the secreted. The catalysed reaction is a 1,2-diacyl-sn-glycero-3-phosphocholine + H2O = a 1-acyl-sn-glycero-3-phosphocholine + a fatty acid + H(+). In terms of biological role, snake venom phospholipase A2 (PLA2) that inhibits collagen-induced platelet aggregation. PLA2 catalyzes the calcium-dependent hydrolysis of the 2-acyl groups in 3-sn-phosphoglycerides. This is Acidic phospholipase A2 S9-53F from Austrelaps superbus (Lowland copperhead snake).